The primary structure comprises 835 residues: Protein translocase subunit SecA (835 aa).

ATP contacts are provided by residues Gln-85, 103-107, and Asp-492; that span reads GEGKT. 4 residues coordinate Zn(2+): Cys-819, Cys-821, Cys-830, and Cys-831.

The protein belongs to the SecA family. Monomer and homodimer. Part of the essential Sec protein translocation apparatus which comprises SecA, SecYEG and auxiliary proteins SecDF. Other proteins may also be involved. The cofactor is Zn(2+).

The protein localises to the cell membrane. Its subcellular location is the cytoplasm. The enzyme catalyses ATP + H2O + cellular proteinSide 1 = ADP + phosphate + cellular proteinSide 2.. In terms of biological role, part of the Sec protein translocase complex. Interacts with the SecYEG preprotein conducting channel. Has a central role in coupling the hydrolysis of ATP to the transfer of proteins into and across the cell membrane, serving as an ATP-driven molecular motor driving the stepwise translocation of polypeptide chains across the membrane. This is Protein translocase subunit SecA from Clostridium botulinum (strain Kyoto / Type A2).